The primary structure comprises 835 residues: Leucine--tRNA ligase (835 aa).

Positions 44 to 54 (PYPSGNIHMGH) match the 'HIGH' region motif. A 'KMSKS' region motif is present at residues 587–591 (KMSKS). Lysine 590 lines the ATP pocket.

Belongs to the class-I aminoacyl-tRNA synthetase family.

Its subcellular location is the cytoplasm. The catalysed reaction is tRNA(Leu) + L-leucine + ATP = L-leucyl-tRNA(Leu) + AMP + diphosphate. This Lawsonia intracellularis (strain PHE/MN1-00) protein is Leucine--tRNA ligase.